A 249-amino-acid chain; its full sequence is Ubiquinone biosynthesis O-methyltransferase (249 aa).

4 residues coordinate S-adenosyl-L-methionine: R41, G72, D93, and M136.

This sequence belongs to the methyltransferase superfamily. UbiG/COQ3 family.

It carries out the reaction a 3-demethylubiquinol + S-adenosyl-L-methionine = a ubiquinol + S-adenosyl-L-homocysteine + H(+). The catalysed reaction is a 3-(all-trans-polyprenyl)benzene-1,2-diol + S-adenosyl-L-methionine = a 2-methoxy-6-(all-trans-polyprenyl)phenol + S-adenosyl-L-homocysteine + H(+). Its pathway is cofactor biosynthesis; ubiquinone biosynthesis. In terms of biological role, O-methyltransferase that catalyzes the 2 O-methylation steps in the ubiquinone biosynthetic pathway. This Mesorhizobium japonicum (strain LMG 29417 / CECT 9101 / MAFF 303099) (Mesorhizobium loti (strain MAFF 303099)) protein is Ubiquinone biosynthesis O-methyltransferase.